The sequence spans 161 residues: MKTKLITRAGYNKLKQELDYLWKEQRPEITQKVSWAASLGDRSENADYTYNKRLLRQIDRRVRFLSKLLPELKIVDYSPQQEGKVFFGAWVEIENEAGEVKKFRIVGPEEIYGDAKDYISIDSPMARALLKKQVDEEFQVHTPTGIKEWFINSIEYEKGEL.

The protein belongs to the GreA/GreB family. GreB subfamily.

Functionally, necessary for efficient RNA polymerase transcription elongation past template-encoded arresting sites. The arresting sites in DNA have the property of trapping a certain fraction of elongating RNA polymerases that pass through, resulting in locked ternary complexes. Cleavage of the nascent transcript by cleavage factors such as GreA or GreB allows the resumption of elongation from the new 3'terminus. GreB releases sequences of up to 9 nucleotides in length. The protein is Transcription elongation factor GreB of Vibrio cholerae serotype O1 (strain ATCC 39315 / El Tor Inaba N16961).